A 235-amino-acid chain; its full sequence is Endonuclease V (235 aa).

Residues D45 and D115 each coordinate Mg(2+).

It belongs to the endonuclease V family. It depends on Mg(2+) as a cofactor.

It is found in the cytoplasm. It catalyses the reaction Endonucleolytic cleavage at apurinic or apyrimidinic sites to products with a 5'-phosphate.. In terms of biological role, DNA repair enzyme involved in the repair of deaminated bases. Selectively cleaves double-stranded DNA at the second phosphodiester bond 3' to a deoxyinosine leaving behind the intact lesion on the nicked DNA. The sequence is that of Endonuclease V from Bacillus thuringiensis subsp. konkukian (strain 97-27).